Consider the following 206-residue polypeptide: Small ribosomal subunit protein uS4 (206 aa).

The S4 RNA-binding domain occupies 96–156; that stretch reads GRLDNVVYRM…EKAKKQARIK (61 aa).

It belongs to the universal ribosomal protein uS4 family. In terms of assembly, part of the 30S ribosomal subunit. Contacts protein S5. The interaction surface between S4 and S5 is involved in control of translational fidelity.

Its function is as follows. One of the primary rRNA binding proteins, it binds directly to 16S rRNA where it nucleates assembly of the body of the 30S subunit. With S5 and S12 plays an important role in translational accuracy. The chain is Small ribosomal subunit protein uS4 from Aeromonas hydrophila subsp. hydrophila (strain ATCC 7966 / DSM 30187 / BCRC 13018 / CCUG 14551 / JCM 1027 / KCTC 2358 / NCIMB 9240 / NCTC 8049).